The sequence spans 573 residues: Protein phosphatase EYA3 (573 aa).

Position 1 is an N-acetylmethionine (M1). Disordered regions lie at residues 1-46 (MEEE…LASN) and 236-296 (TYQS…DATS). Over residues 20–46 (SGEQTISQVSNPDVSDQKPETSSLASN) the composition is skewed to polar residues. A compositionally biased stretch (low complexity) spans 254 to 271 (LSSGDPSTSPSLSQTTPS). S262 and S266 each carry phosphoserine. The active-site Nucleophile is D309. 2 residues coordinate Mg(2+): D309 and D311. D311 serves as the catalytic Proton donor. Residues S438 and S472 each carry the phosphoserine modification. D537 provides a ligand contact to Mg(2+).

Belongs to the HAD-like hydrolase superfamily. EYA family. As to quaternary structure, interacts with SIX1 and DACH1, and probably SIX2, SIX4, SIX5. It depends on Mg(2+) as a cofactor. In terms of processing, ser-266 phosphorylation is required for localization at sites of DNA damage and directing interaction with H2AX.

It localises to the cytoplasm. The protein localises to the nucleus. It catalyses the reaction O-phospho-L-tyrosyl-[protein] + H2O = L-tyrosyl-[protein] + phosphate. In terms of biological role, tyrosine phosphatase that specifically dephosphorylates 'Tyr-142' of histone H2AX (H2AXY142ph). 'Tyr-142' phosphorylation of histone H2AX plays a central role in DNA repair and acts as a mark that distinguishes between apoptotic and repair responses to genotoxic stress. Promotes efficient DNA repair by dephosphorylating H2AX, promoting the recruitment of DNA repair complexes containing MDC1. Its function as histone phosphatase probably explains its role in transcription regulation during organogenesis. Coactivates SIX1, and seems to coactivate SIX2, SIX4 and SIX5. The repression of precursor cell proliferation in myoblasts by SIX1 is switched to activation through recruitment of EYA3 to the SIX1-DACH1 complex and seems to be dependent on EYA3 phosphatase activity. May be involved in development of the eye. In Homo sapiens (Human), this protein is Protein phosphatase EYA3 (EYA3).